Here is a 375-residue protein sequence, read N- to C-terminus: Queuine tRNA-ribosyltransferase (375 aa).

Catalysis depends on D90, which acts as the Proton acceptor. Residues 90–94 (DSGGF), D144, Q190, and G217 each bind substrate. The tract at residues 248 to 254 (GIGTPHY) is RNA binding. D267 functions as the Nucleophile in the catalytic mechanism. The RNA binding; important for wobble base 34 recognition stretch occupies residues 272-276 (ARITR). C305, C307, C310, and H336 together coordinate Zn(2+).

It belongs to the queuine tRNA-ribosyltransferase family. Homodimer. Within each dimer, one monomer is responsible for RNA recognition and catalysis, while the other monomer binds to the replacement base PreQ1. Zn(2+) is required as a cofactor.

It carries out the reaction 7-aminomethyl-7-carbaguanine + guanosine(34) in tRNA = 7-aminomethyl-7-carbaguanosine(34) in tRNA + guanine. It functions in the pathway tRNA modification; tRNA-queuosine biosynthesis. Its function is as follows. Catalyzes the base-exchange of a guanine (G) residue with the queuine precursor 7-aminomethyl-7-deazaguanine (PreQ1) at position 34 (anticodon wobble position) in tRNAs with GU(N) anticodons (tRNA-Asp, -Asn, -His and -Tyr). Catalysis occurs through a double-displacement mechanism. The nucleophile active site attacks the C1' of nucleotide 34 to detach the guanine base from the RNA, forming a covalent enzyme-RNA intermediate. The proton acceptor active site deprotonates the incoming PreQ1, allowing a nucleophilic attack on the C1' of the ribose to form the product. After dissociation, two additional enzymatic reactions on the tRNA convert PreQ1 to queuine (Q), resulting in the hypermodified nucleoside queuosine (7-(((4,5-cis-dihydroxy-2-cyclopenten-1-yl)amino)methyl)-7-deazaguanosine). This chain is Queuine tRNA-ribosyltransferase, found in Borreliella burgdorferi (strain ZS7) (Borrelia burgdorferi).